The following is a 163-amino-acid chain: Probable cyclic pyranopterin monophosphate synthase (163 aa).

The tract at residues 1–23 is disordered; it reads MPDGDDDALTHTTADGDAQMVDV. Substrate is bound by residues 80–82 and 116–117; these read MCH and ME. Aspartate 131 is an active-site residue.

This sequence belongs to the MoaC family. In terms of assembly, homohexamer; trimer of dimers.

It carries out the reaction (8S)-3',8-cyclo-7,8-dihydroguanosine 5'-triphosphate = cyclic pyranopterin phosphate + diphosphate. It participates in cofactor biosynthesis; molybdopterin biosynthesis. Its function is as follows. Catalyzes the conversion of (8S)-3',8-cyclo-7,8-dihydroguanosine 5'-triphosphate to cyclic pyranopterin monophosphate (cPMP). This chain is Probable cyclic pyranopterin monophosphate synthase, found in Halobacterium salinarum (strain ATCC 29341 / DSM 671 / R1).